The sequence spans 271 residues: Formamidopyrimidine-DNA glycosylase (271 aa).

The active-site Schiff-base intermediate with DNA is the proline 2. Glutamate 3 functions as the Proton donor in the catalytic mechanism. Lysine 57 serves as the catalytic Proton donor; for beta-elimination activity. Histidine 90, arginine 109, and lysine 151 together coordinate DNA. The FPG-type zinc-finger motif lies at 236–270; it reads HVYSRGGETCTSCGNLLSEIRLGQRTTVFCGICQT. Arginine 260 (proton donor; for delta-elimination activity) is an active-site residue.

The protein belongs to the FPG family. Monomer. Zn(2+) serves as cofactor.

The catalysed reaction is Hydrolysis of DNA containing ring-opened 7-methylguanine residues, releasing 2,6-diamino-4-hydroxy-5-(N-methyl)formamidopyrimidine.. The enzyme catalyses 2'-deoxyribonucleotide-(2'-deoxyribose 5'-phosphate)-2'-deoxyribonucleotide-DNA = a 3'-end 2'-deoxyribonucleotide-(2,3-dehydro-2,3-deoxyribose 5'-phosphate)-DNA + a 5'-end 5'-phospho-2'-deoxyribonucleoside-DNA + H(+). Functionally, involved in base excision repair of DNA damaged by oxidation or by mutagenic agents. Acts as a DNA glycosylase that recognizes and removes damaged bases. Has a preference for oxidized purines, such as 7,8-dihydro-8-oxoguanine (8-oxoG). Has AP (apurinic/apyrimidinic) lyase activity and introduces nicks in the DNA strand. Cleaves the DNA backbone by beta-delta elimination to generate a single-strand break at the site of the removed base with both 3'- and 5'-phosphates. This is Formamidopyrimidine-DNA glycosylase from Shewanella baltica (strain OS195).